We begin with the raw amino-acid sequence, 82 residues long: Small ribosomal subunit protein bS18 (82 aa).

The protein belongs to the bacterial ribosomal protein bS18 family. In terms of assembly, part of the 30S ribosomal subunit. Forms a tight heterodimer with protein bS6.

In terms of biological role, binds as a heterodimer with protein bS6 to the central domain of the 16S rRNA, where it helps stabilize the platform of the 30S subunit. In Bartonella bacilliformis (strain ATCC 35685 / KC583 / Herrer 020/F12,63), this protein is Small ribosomal subunit protein bS18.